We begin with the raw amino-acid sequence, 95 residues long: Co-chaperonin GroES (95 aa).

Belongs to the GroES chaperonin family. In terms of assembly, heptamer of 7 subunits arranged in a ring. Interacts with the chaperonin GroEL.

It is found in the cytoplasm. Functionally, together with the chaperonin GroEL, plays an essential role in assisting protein folding. The GroEL-GroES system forms a nano-cage that allows encapsulation of the non-native substrate proteins and provides a physical environment optimized to promote and accelerate protein folding. GroES binds to the apical surface of the GroEL ring, thereby capping the opening of the GroEL channel. In Streptococcus thermophilus (strain ATCC BAA-491 / LMD-9), this protein is Co-chaperonin GroES.